The primary structure comprises 187 residues: Calcium and integrin-binding family member 2 (187 aa).

EF-hand domains follow at residues 66 to 101 (RENPFKERIVAAFSEDGEGNLTFNDFVDMFSVLCES), 103 to 138 (PRELKANYAFKIYDFNTDNFICKEDLELTLARLTKS), and 144 to 179 (EVVLVCDKVIEEADLDGDGKLGFADFEDMIAKAPDF). Residues Asp116, Asn118, Asp120, Asp127, Asp157, Asp159, Asp161, Lys163, and Asp168 each contribute to the Ca(2+) site.

In terms of assembly, monomer. Homodimer. Interacts with WHRN and MYO7A. Interacts with ITGA2B (via C-terminus cytoplasmic tail region); the interactions are stabilized/increased in a calcium and magnesium-dependent manner. Interacts with ITGA7 (via C-terminus cytoplasmic tail region); the interactions are stabilized/increased in a calcium and magnesium-dependent manner. Interacts with TMC1. Interacts with TMC2. In terms of tissue distribution, widely expressed.

It is found in the cytoplasm. The protein resides in the cell projection. It localises to the stereocilium. The protein localises to the photoreceptor inner segment. Its subcellular location is the cilium. It is found in the photoreceptor outer segment. The protein resides in the cell membrane. It localises to the sarcolemma. In terms of biological role, calcium- and integrin-binding protein that plays a role in intracellular calcium homeostasis. Acts as an auxiliary subunit of the sensory mechanoelectrical transduction (MET) channel in hair cells. Essential for mechanoelectrical transduction (MET) currents in auditory hair cells and thereby required for hearing. Regulates the function of hair cell mechanotransduction by controlling the distribution of transmembrane channel-like proteins TMC1 and TMC2, and by regulating the function of the MET channels in hair cells. Required for the maintenance of auditory hair cell stereocilia bundle morphology and function and for hair-cell survival in the cochlea. Critical for proper photoreceptor cell maintenance and function. Plays a role in intracellular calcium homeostasis by decreasing ATP-induced calcium release. This is Calcium and integrin-binding family member 2 (CIB2) from Homo sapiens (Human).